The primary structure comprises 76 residues: Adropin (76 aa).

Residues 1-33 (MGAALSQGALIAIICNGLVGFLLLLLWVILCWA) form the signal peptide. The interval 41–76 (IDSLSESSPNSSPGPCPEKAPPPQKPSHEGSYLLQP) is disordered. Residues 52–65 (SPGPCPEKAPPPQK) show a composition bias toward pro residues.

It is found in the secreted. Its function is as follows. Involved in the regulation of glucose homeostasis and lipid metabolism. This is Adropin (ENHO) from Bos taurus (Bovine).